Consider the following 404-residue polypeptide: Cysteine desulfurase IscS (404 aa).

Residues 75-76, asparagine 155, glutamine 183, and 203-205 each bind pyridoxal 5'-phosphate; these read AT and SGH. The residue at position 206 (lysine 206) is an N6-(pyridoxal phosphate)lysine. Threonine 243 contacts pyridoxal 5'-phosphate. Residue cysteine 328 is the Cysteine persulfide intermediate of the active site. Position 328 (cysteine 328) interacts with [2Fe-2S] cluster.

This sequence belongs to the class-V pyridoxal-phosphate-dependent aminotransferase family. NifS/IscS subfamily. In terms of assembly, homodimer. Forms a heterotetramer with IscU, interacts with other sulfur acceptors. Pyridoxal 5'-phosphate serves as cofactor.

The protein resides in the cytoplasm. The catalysed reaction is (sulfur carrier)-H + L-cysteine = (sulfur carrier)-SH + L-alanine. Its pathway is cofactor biosynthesis; iron-sulfur cluster biosynthesis. Its function is as follows. Master enzyme that delivers sulfur to a number of partners involved in Fe-S cluster assembly, tRNA modification or cofactor biosynthesis. Catalyzes the removal of elemental sulfur atoms from cysteine to produce alanine. Functions as a sulfur delivery protein for Fe-S cluster synthesis onto IscU, an Fe-S scaffold assembly protein, as well as other S acceptor proteins. The chain is Cysteine desulfurase IscS from Shewanella baltica (strain OS185).